Here is a 432-residue protein sequence, read N- to C-terminus: Solute carrier family 38 member 8 (432 aa).

Transmembrane regions (helical) follow at residues 29–49, 59–79, 103–123, 144–164, 175–195, 215–237, 253–273, 292–312, 345–365, 368–388, and 409–429; these read AVFI…PWAF, FLVA…LGYA, LCEI…LRVI, AAQN…LSAL, ILGT…YYLW, VFSV…SIYC, LSLL…FLTF, IIVA…IVLF, LPLT…LPDL, IISI…GLCL, and GILS…VAMV.

This sequence belongs to the amino acid/polyamine transporter 2 family. Expressed in neurons located in the gray matter. Highly expressed in thalamus, hypothalamus, amygdala and pons. Expressed in the CA3 area of hippocampus and in the Purkinje layer of the cerebellum (at protein level). Expressed in the eye.

It localises to the membrane. It is found in the cytoplasm. The protein resides in the cell cortex. Its subcellular location is the cell projection. The protein localises to the axon. The enzyme catalyses L-glutamine(out) = L-glutamine(in). The catalysed reaction is L-alanine(in) = L-alanine(out). It carries out the reaction L-histidine(out) = L-histidine(in). It catalyses the reaction L-aspartate(out) = L-aspartate(in). The enzyme catalyses L-arginine(in) = L-arginine(out). The catalysed reaction is L-leucine(in) = L-leucine(out). Its function is as follows. Electrogenic sodium-dependent amino acid transporter with a preference for L-glutamine, L-alanine, L-histidine, L-aspartate and L-arginine. May facilitate glutamine uptake in both excitatory and inhibitory neurons. The transport mechanism and stoichiometry remain to be elucidated. This is Solute carrier family 38 member 8 from Mus musculus (Mouse).